The sequence spans 318 residues: 2-dehydro-3-deoxygalactonokinase (318 aa).

Substrate is bound by residues 35 to 39 (GAESN), Tyr90, 105 to 107 (YDR), and Arg169. Residues 167–169 (NYR), 228–233 (TRGEDG), and 257–260 (GTGD) contribute to the ATP site. Substrate contacts are provided by Asp260 and Asp296. The active-site Proton acceptor is the Asp260.

This sequence belongs to the carbohydrate kinase PfkB family. In terms of assembly, homohexamer.

The catalysed reaction is 2-dehydro-3-deoxy-D-galactonate + ATP = 2-dehydro-3-deoxy-6-phospho-D-galactonate + ADP + H(+). In terms of biological role, involved in galactose catabolism. Catalyzes the phosphorylation of 2-keto-3-deoxygalactonate (KDGal) to produce 2-keto-3-deoxy-6-phosphogalactonate (KDPGal). Can also phosphorylate 2-keto-3-deoxygluconate (KDG) to 2-keto-3-deoxy-6-phosphogluconate (KDPG), but the catalytic efficiency for KDGal is 50-fold higher than for KDG. The sequence is that of 2-dehydro-3-deoxygalactonokinase from Haloferax volcanii (strain ATCC 29605 / DSM 3757 / JCM 8879 / NBRC 14742 / NCIMB 2012 / VKM B-1768 / DS2) (Halobacterium volcanii).